The chain runs to 345 residues: Phosphoribosylformylglycinamidine cyclo-ligase (345 aa).

It belongs to the AIR synthase family.

It is found in the cytoplasm. The enzyme catalyses 2-formamido-N(1)-(5-O-phospho-beta-D-ribosyl)acetamidine + ATP = 5-amino-1-(5-phospho-beta-D-ribosyl)imidazole + ADP + phosphate + H(+). Its pathway is purine metabolism; IMP biosynthesis via de novo pathway; 5-amino-1-(5-phospho-D-ribosyl)imidazole from N(2)-formyl-N(1)-(5-phospho-D-ribosyl)glycinamide: step 2/2. In Anaeromyxobacter dehalogenans (strain 2CP-C), this protein is Phosphoribosylformylglycinamidine cyclo-ligase.